A 543-amino-acid polypeptide reads, in one-letter code: CTP synthase (543 aa).

Positions 1-270 (MNNLTSTKFI…DTQILKHFNI (270 aa)) are amidoligase domain. CTP is bound at residue Ser-18. Ser-18 contacts UTP. ATP contacts are provided by residues 19-24 (SLGKGL) and Asp-76. Mg(2+) contacts are provided by Asp-76 and Glu-144. Residues 151 to 153 (DIE), 191 to 196 (KTKPTQ), and Lys-227 each bind CTP. Residues 191–196 (KTKPTQ) and Lys-227 contribute to the UTP site. The Glutamine amidotransferase type-1 domain occupies 295–537 (TIAIIGKYIK…IQASLNYQET (243 aa)). L-glutamine is bound at residue Gly-356. The active-site Nucleophile; for glutamine hydrolysis is Cys-383. Residues 384–387 (MGMQ), Glu-407, and Arg-462 contribute to the L-glutamine site. Catalysis depends on residues His-510 and Glu-512.

Belongs to the CTP synthase family. In terms of assembly, homotetramer.

It catalyses the reaction UTP + L-glutamine + ATP + H2O = CTP + L-glutamate + ADP + phosphate + 2 H(+). The enzyme catalyses L-glutamine + H2O = L-glutamate + NH4(+). It carries out the reaction UTP + NH4(+) + ATP = CTP + ADP + phosphate + 2 H(+). It participates in pyrimidine metabolism; CTP biosynthesis via de novo pathway; CTP from UDP: step 2/2. With respect to regulation, allosterically activated by GTP, when glutamine is the substrate; GTP has no effect on the reaction when ammonia is the substrate. The allosteric effector GTP functions by stabilizing the protein conformation that binds the tetrahedral intermediate(s) formed during glutamine hydrolysis. Inhibited by the product CTP, via allosteric rather than competitive inhibition. Functionally, catalyzes the ATP-dependent amination of UTP to CTP with either L-glutamine or ammonia as the source of nitrogen. Regulates intracellular CTP levels through interactions with the four ribonucleotide triphosphates. This chain is CTP synthase, found in Ehrlichia ruminantium (strain Gardel).